The following is a 240-amino-acid chain: Uridylate kinase (240 aa).

ATP is bound at residue 12-15 (KLSG). The involved in allosteric activation by GTP stretch occupies residues 20–25 (GKQGFG). Glycine 54 is a binding site for UMP. 2 residues coordinate ATP: glycine 55 and arginine 59. Residues aspartate 74 and 135-142 (TGNPYFST) contribute to the UMP site. The ATP site is built by asparagine 163, tyrosine 169, and aspartate 172.

It belongs to the UMP kinase family. Homohexamer.

The protein localises to the cytoplasm. The enzyme catalyses UMP + ATP = UDP + ADP. Its pathway is pyrimidine metabolism; CTP biosynthesis via de novo pathway; UDP from UMP (UMPK route): step 1/1. Allosterically activated by GTP. Inhibited by UTP. Functionally, catalyzes the reversible phosphorylation of UMP to UDP. In Geobacillus thermodenitrificans (strain NG80-2), this protein is Uridylate kinase.